We begin with the raw amino-acid sequence, 243 residues long: Ubiquinone/menaquinone biosynthesis C-methyltransferase UbiE (243 aa).

S-adenosyl-L-methionine contacts are provided by residues Thr-69, Asp-90, and 116-117; that span reads DA.

Belongs to the class I-like SAM-binding methyltransferase superfamily. MenG/UbiE family.

It catalyses the reaction a 2-demethylmenaquinol + S-adenosyl-L-methionine = a menaquinol + S-adenosyl-L-homocysteine + H(+). The catalysed reaction is a 2-methoxy-6-(all-trans-polyprenyl)benzene-1,4-diol + S-adenosyl-L-methionine = a 5-methoxy-2-methyl-3-(all-trans-polyprenyl)benzene-1,4-diol + S-adenosyl-L-homocysteine + H(+). Its pathway is quinol/quinone metabolism; menaquinone biosynthesis; menaquinol from 1,4-dihydroxy-2-naphthoate: step 2/2. The protein operates within cofactor biosynthesis; ubiquinone biosynthesis. Functionally, methyltransferase required for the conversion of demethylmenaquinol (DMKH2) to menaquinol (MKH2) and the conversion of 2-polyprenyl-6-methoxy-1,4-benzoquinol (DDMQH2) to 2-polyprenyl-3-methyl-6-methoxy-1,4-benzoquinol (DMQH2). This chain is Ubiquinone/menaquinone biosynthesis C-methyltransferase UbiE, found in Cupriavidus metallidurans (strain ATCC 43123 / DSM 2839 / NBRC 102507 / CH34) (Ralstonia metallidurans).